The following is a 370-amino-acid chain: uncharacterized protein (370 aa).

The next 10 helical transmembrane spans lie at 6-26, 49-69, 79-99, 111-131, 143-163, 167-187, 206-226, 236-256, 307-327, and 333-353; these read AVVFILAAFLLWGAADYCLGN, IGIVSLAPVLAAILIPIVAPF, SFANTILAIDMGGYALAGEMA, FLGTMMGPAIVFTIPVALGII, ILIGLCTVPIGCLIGGLCAGF, MIGKNLLIPSLLSAVIAFGLW, MVAIIGLAAVSVETMTGIVLI, IQTTGTIAIALAGAFPMTAFI, VAFAVSGAFVLGSHLGFVAGM, and AAMIIGKLAGGVTAAAAAAWM.

It belongs to the EutH family.

The protein resides in the cell membrane. This is an uncharacterized protein from Bacillus subtilis (strain 168).